Reading from the N-terminus, the 1086-residue chain is Receptor-type guanylate cyclase gcy-6 (1086 aa).

The first 21 residues, 1–21 (MIGVYLRSVIFPLLFVIQTIC), serve as a signal peptide directing secretion. Residues 22 to 487 (QPPGNVFHLG…PANVFFQYIG (466 aa)) lie on the Extracellular side of the membrane. Asn325, Asn343, Asn387, and Asn427 each carry an N-linked (GlcNAc...) asparagine glycan. The helical transmembrane segment at 488–508 (WFIAAIIIIFFTIMGAILAFI) threads the bilayer. At 509–1086 (YLCHAKQQEV…APKILKKKQD (578 aa)) the chain is on the cytoplasmic side. The Protein kinase domain maps to 560–836 (SSTLSEVGET…NDNLMDHVFN (277 aa)). Residues 566-574 (VGETRNYLF) and Lys589 each bind ATP. The Guanylate cyclase domain occupies 894–1024 (TLFFSDVVSF…DAVNTASRME (131 aa)).

Belongs to the adenylyl cyclase class-4/guanylyl cyclase family. As to expression, expressed in both ASEL and ASER neurons throughout late embryonic and early larval stages. In adults, expressed asymmetrically in ASE left (ASEL) sensory neuron.

Its subcellular location is the cell membrane. It carries out the reaction GTP = 3',5'-cyclic GMP + diphosphate. In terms of biological role, guanylate cyclase involved in the production of the second messenger cGMP. Regulates chemotaxis responses toward the salt ion Mg(2+) and to a lesser extent toward Cl(1-) in ASE left (ASEL) sensory neuron. This is Receptor-type guanylate cyclase gcy-6 from Caenorhabditis elegans.